The chain runs to 220 residues: Chaperone protein TorD (220 aa).

Belongs to the TorD/DmsD family. TorD subfamily.

Its subcellular location is the cytoplasm. In terms of biological role, involved in the biogenesis of TorA. Acts on TorA before the insertion of the molybdenum cofactor and, as a result, probably favors a conformation of the apoenzyme that is competent for acquiring the cofactor. The polypeptide is Chaperone protein TorD (Vibrio cholerae serotype O1 (strain M66-2)).